Reading from the N-terminus, the 24-residue chain is Brevinin-1SPa (24 aa).

Cys-18 and Cys-24 are disulfide-bonded.

In terms of tissue distribution, expressed by the skin glands.

It is found in the secreted. Its function is as follows. Antimicrobial peptide with activity against Gram-negative and Gram-positive bacteria (MIC=13 uM against E.coli, MIC=3 uM against S.aureus) and fungi (MIC=6 uM against C.albicans). Shows hemolytic activity on human erythrocytes (HC(50)=7 uM). This is Brevinin-1SPa from Lithobates septentrionalis (Mink frog).